The primary structure comprises 181 residues: UPF0316 protein Bcer98_2136 (181 aa).

3 helical membrane passes run 6–26 (LIFVLQIIYVPVLTIRTILLV), 32–52 (SAAGVGLLEGAIYIISLGIVF), and 58–78 (WMNIVAYIIGFSAGLLLGGYI).

It belongs to the UPF0316 family.

It localises to the cell membrane. The chain is UPF0316 protein Bcer98_2136 from Bacillus cytotoxicus (strain DSM 22905 / CIP 110041 / 391-98 / NVH 391-98).